The following is a 460-amino-acid chain: Kynureninase (460 aa).

Pyridoxal 5'-phosphate is bound by residues L116, T117, 144-147 (FPSD), S199, D228, H231, and Y253. K254 carries the N6-(pyridoxal phosphate)lysine modification. Residues W288 and N316 each coordinate pyridoxal 5'-phosphate.

The protein belongs to the kynureninase family. In terms of assembly, homodimer. The cofactor is pyridoxal 5'-phosphate.

It is found in the cytoplasm. The enzyme catalyses L-kynurenine + H2O = anthranilate + L-alanine + H(+). The catalysed reaction is 3-hydroxy-L-kynurenine + H2O = 3-hydroxyanthranilate + L-alanine + H(+). Its pathway is amino-acid degradation; L-kynurenine degradation; L-alanine and anthranilate from L-kynurenine: step 1/1. It functions in the pathway cofactor biosynthesis; NAD(+) biosynthesis; quinolinate from L-kynurenine: step 2/3. Functionally, catalyzes the cleavage of L-kynurenine (L-Kyn) and L-3-hydroxykynurenine (L-3OHKyn) into anthranilic acid (AA) and 3-hydroxyanthranilic acid (3-OHAA), respectively. The chain is Kynureninase from Debaryomyces hansenii (strain ATCC 36239 / CBS 767 / BCRC 21394 / JCM 1990 / NBRC 0083 / IGC 2968) (Yeast).